A 148-amino-acid chain; its full sequence is uncharacterized protein (148 aa).

The 62-residue stretch at 4–65 (LDKVDIQLVK…IPDLDKLGYM (62 aa)) folds into the HTH asnC-type domain. A DNA-binding region (H-T-H motif) is located at residues 23–42 (YRELAELMNTTRQRIARRIT).

This is an uncharacterized protein from Pyrococcus abyssi (strain GE5 / Orsay).